The following is a 229-amino-acid chain: Triosephosphate isomerase (229 aa).

Residue 9-11 (NLK) coordinates substrate. The active-site Electrophile is the H93. The active-site Proton acceptor is E141. Substrate-binding positions include I146, G181, and 202-203 (AS).

This sequence belongs to the triosephosphate isomerase family. In terms of assembly, homotetramer; dimer of dimers.

Its subcellular location is the cytoplasm. It carries out the reaction D-glyceraldehyde 3-phosphate = dihydroxyacetone phosphate. Its pathway is carbohydrate biosynthesis; gluconeogenesis. It participates in carbohydrate degradation; glycolysis; D-glyceraldehyde 3-phosphate from glycerone phosphate: step 1/1. Involved in the gluconeogenesis. Catalyzes stereospecifically the conversion of dihydroxyacetone phosphate (DHAP) to D-glyceraldehyde-3-phosphate (G3P). This Pyrobaculum islandicum (strain DSM 4184 / JCM 9189 / GEO3) protein is Triosephosphate isomerase.